An 826-amino-acid chain; its full sequence is Golgin subfamily A member 6-like protein 25 (826 aa).

6 disordered regions span residues 1–100, 297–327, 345–425, 502–534, 547–646, and 658–826; these read MWPQ…HQEA, QEQE…MRRQ, MHEQ…EMWR, QEEM…MWRQ, RQEE…EQEE, and QEEM…MQEH. Residues 31–52 are compositionally biased toward basic and acidic residues; the sequence is MSKETRQSKLAEAKEQLTDHHP. 2 stretches are compositionally biased toward polar residues: residues 53-63 and 71-83; these read QTNPSVGTAAS and NNGT…TSGG. A compositionally biased stretch (basic and acidic residues) spans 86 to 100; sequence SPEDEQKASHQHQEA. The stretch at 157–822 forms a coiled coil; that stretch reads LEQALSAVAT…EVRLRQQEEK (666 aa). 2 stretches are compositionally biased toward basic and acidic residues: residues 658–678 and 686–826; these read QEEM…KMWE and QEEK…MQEH.

Belongs to the GOLGA6 family.

The sequence is that of Golgin subfamily A member 6-like protein 25 from Homo sapiens (Human).